The following is a 64-amino-acid chain: Large ribosomal subunit protein bL35 (64 aa).

A compositionally biased stretch (basic residues) spans 1–44; the sequence is MSKIKSHSGAAKRFKRTANGFKHKQSHTSHILTKKSTKRKRHLR. Residues 1–48 form a disordered region; it reads MSKIKSHSGAAKRFKRTANGFKHKQSHTSHILTKKSTKRKRHLRSMNQ.

Belongs to the bacterial ribosomal protein bL35 family.

The protein is Large ribosomal subunit protein bL35 of Marinomonas sp. (strain MWYL1).